The following is a 1007-amino-acid chain: Protein vav-1 (1007 aa).

Residues 37-151 form the Calponin-homology (CH) domain; the sequence is CDLWIGCARW…TLSFLSHTKE (115 aa). Residues 151–239 are AC; that stretch reads ESLSRGVDPF…ENDLQNTPTL (89 aa). Residues 153 to 176 are disordered; it reads LSRGVDPFPDTDNNQEGTSNGSEF. Over residues 163-174 the composition is skewed to polar residues; it reads TDNNQEGTSNGS. 3 positions are modified to phosphotyrosine: Y183, Y200, and Y217. The 198-residue stretch at 240–437 folds into the DH domain; sequence KRNRCIRELY…EDVCNYINEE (198 aa). The 129-residue stretch at 470–598 folds into the PH domain; sequence RVNLDGEVKM…WMTALLLSKS (129 aa). The Phorbol-ester/DAG-type zinc-finger motif lies at 610-664; sequence NHKVAFHSFRVDVKNPATCDVCDKLMKGLQYQGYKCESCNMSMHKECLGLKKCEA. Positions 688 to 750 constitute an SH3 1 domain; sequence HEGDIVVANS…HLDHVSQSRT (63 aa). Residues 778-817 form a disordered region; the sequence is LPNKLLSDGSSRSLSGPHGSRSSRNSSSSTINGSMDSVPR. Residues 782–814 are compositionally biased toward low complexity; sequence LLSDGSSRSLSGPHGSRSSRNSSSSTINGSMDS. An SH2 domain is found at 831 to 925; that stretch reads WYMGEMERAK…ALDTCLKNPY (95 aa). One can recognise an SH3 2 domain in the interval 926 to 991; that stretch reads SQCKVFKAVH…PLSYVKPYDP (66 aa).

In terms of processing, GEF activity is regulated by phosphorylation on tyrosine residues. In terms of tissue distribution, strong expression in the pharynx, proximal gonad, spermatheca, intestine and rectal epithelia.

Its function is as follows. Acts as a guanine nucleotide exchange factor (GEF) for Rho GTPase. Has a critical roles in the generation of rhythmic behaviors: feeding, defecation and ovulation by dynamically regulating the concentration of intracellular calcium. Plays a role in male tail tip morphogenesis. This is Protein vav-1 from Caenorhabditis elegans.